A 247-amino-acid chain; its full sequence is Cytochrome c oxidase subunit 2 (247 aa).

Residues 1 to 11 (MLLIINNIINN) form the signal peptide. Residues 12–38 (DVPTPWGVYFQDSATPNHEGIIELHDN) are Mitochondrial intermembrane-facing. The helical transmembrane segment at 39–59 (IMFYLVLILCLVSWLLFSIVK) threads the bilayer. Residues 60 to 78 (DGSKNPLPHKYLVHGQTIE) lie on the Mitochondrial matrix side of the membrane. A helical transmembrane segment spans residues 79–101 (IIWTILPALVLLVIAFPSFILLY). Residues 102 to 247 (LCDEVISPAM…KEFLTWLNEQ (146 aa)) lie on the Mitochondrial intermembrane side of the membrane. Cu cation-binding residues include His182, Cys217, Glu219, Cys221, His225, and Met228. Mg(2+) is bound at residue Glu219.

It belongs to the cytochrome c oxidase subunit 2 family. As to quaternary structure, component of the cytochrome c oxidase (complex IV, CIV), a multisubunit enzyme composed of a catalytic core of 3 subunits and several supernumerary subunits. The complex exists as a monomer or a dimer and forms supercomplexes (SCs) in the inner mitochondrial membrane with ubiquinol-cytochrome c oxidoreductase (cytochrome b-c1 complex, complex III, CIII). The cofactor is Cu cation. The signal sequence of COX2 is processed by IMP1.

It is found in the mitochondrion inner membrane. It catalyses the reaction 4 Fe(II)-[cytochrome c] + O2 + 8 H(+)(in) = 4 Fe(III)-[cytochrome c] + 2 H2O + 4 H(+)(out). Component of the cytochrome c oxidase, the last enzyme in the mitochondrial electron transport chain which drives oxidative phosphorylation. The respiratory chain contains 3 multisubunit complexes succinate dehydrogenase (complex II, CII), ubiquinol-cytochrome c oxidoreductase (cytochrome b-c1 complex, complex III, CIII) and cytochrome c oxidase (complex IV, CIV), that cooperate to transfer electrons derived from NADH and succinate to molecular oxygen, creating an electrochemical gradient over the inner membrane that drives transmembrane transport and the ATP synthase. Cytochrome c oxidase is the component of the respiratory chain that catalyzes the reduction of oxygen to water. Electrons originating from reduced cytochrome c in the intermembrane space (IMS) are transferred via the dinuclear copper A center (CU(A)) of subunit 2 and heme A of subunit 1 to the active site in subunit 1, a binuclear center (BNC) formed by heme A3 and copper B (CU(B)). The BNC reduces molecular oxygen to 2 water molecules using 4 electrons from cytochrome c in the IMS and 4 protons from the mitochondrial matrix. In Wickerhamomyces canadensis (Yeast), this protein is Cytochrome c oxidase subunit 2 (COX2).